The primary structure comprises 66 residues: Large ribosomal subunit protein bL35 (66 aa).

The segment covering 1–16 (MPKQKTHRASAKRFKR) has biased composition (basic residues). Positions 1–20 (MPKQKTHRASAKRFKRTGNG) are disordered.

The protein belongs to the bacterial ribosomal protein bL35 family.

This chain is Large ribosomal subunit protein bL35, found in Lactococcus lactis subsp. lactis (strain IL1403) (Streptococcus lactis).